A 471-amino-acid chain; its full sequence is Kynurenine 3-monooxygenase (471 aa).

FAD is bound by residues Val19, Tyr37–Arg40, and Ala57. L-kynurenine-binding residues include Arg85 and Tyr99. FAD-binding positions include Arg111, Leu136, Thr172, Asp304, and Met317–Asn318. Residues Asn363 and Tyr398 each contribute to the L-kynurenine site. Transmembrane regions (helical) follow at residues Cys385 to Ser404 and Ala425 to Thr445.

The protein belongs to the aromatic-ring hydroxylase family. KMO subfamily. It depends on FAD as a cofactor.

Its subcellular location is the mitochondrion outer membrane. It catalyses the reaction L-kynurenine + NADPH + O2 + H(+) = 3-hydroxy-L-kynurenine + NADP(+) + H2O. The protein operates within cofactor biosynthesis; NAD(+) biosynthesis; quinolinate from L-kynurenine: step 1/3. Functionally, catalyzes the hydroxylation of L-kynurenine (L-Kyn) to form 3-hydroxy-L-kynurenine (L-3OHKyn). Required for synthesis of quinolinic acid, a neurotoxic NMDA receptor antagonist and potential endogenous inhibitor of NMDA receptor signaling in axonal targeting, synaptogenesis and apoptosis during brain development. Quinolinic acid may also affect NMDA receptor signaling in pancreatic beta cells, osteoblasts, myocardial cells, and the gastrointestinal tract. The polypeptide is Kynurenine 3-monooxygenase (Sus scrofa (Pig)).